A 49-amino-acid chain; its full sequence is uncharacterized protein (49 aa).

This is an uncharacterized protein from Enterobacteria phage T3 (Bacteriophage T3).